Here is a 586-residue protein sequence, read N- to C-terminus: Arginine--tRNA ligase (586 aa).

Residues 131–141 carry the 'HIGH' region motif; it reads ANPTGPLHVGH.

This sequence belongs to the class-I aminoacyl-tRNA synthetase family. As to quaternary structure, monomer.

It localises to the cytoplasm. It carries out the reaction tRNA(Arg) + L-arginine + ATP = L-arginyl-tRNA(Arg) + AMP + diphosphate. The polypeptide is Arginine--tRNA ligase (Nitrosomonas europaea (strain ATCC 19718 / CIP 103999 / KCTC 2705 / NBRC 14298)).